A 314-amino-acid polypeptide reads, in one-letter code: Putative glycosyltransferase ORF31 (314 aa).

It belongs to the glycosyltransferase group 1 family.

The chain is Putative glycosyltransferase ORF31 from Haloarcula hispanica (His1V).